The primary structure comprises 122 residues: Small ribosomal subunit protein uS13 (122 aa).

The tract at residues 95–122 (NLPVRGQRTHTNARTRKGKAKPIAGKKK) is disordered.

The protein belongs to the universal ribosomal protein uS13 family. Part of the 30S ribosomal subunit. Forms a loose heterodimer with protein S19. Forms two bridges to the 50S subunit in the 70S ribosome.

Functionally, located at the top of the head of the 30S subunit, it contacts several helices of the 16S rRNA. In the 70S ribosome it contacts the 23S rRNA (bridge B1a) and protein L5 of the 50S subunit (bridge B1b), connecting the 2 subunits; these bridges are implicated in subunit movement. Contacts the tRNAs in the A and P-sites. The sequence is that of Small ribosomal subunit protein uS13 from Methylobacterium nodulans (strain LMG 21967 / CNCM I-2342 / ORS 2060).